The primary structure comprises 534 residues: Echilunin cytochrome P450 monooxygenase (534 aa).

A helical transmembrane segment spans residues 18–38; sequence VSPAALSWAVVAIYLGTFFWL. Cysteine 441 provides a ligand contact to heme.

This sequence belongs to the cytochrome P450 family. Heme serves as cofactor.

The protein localises to the membrane. It catalyses the reaction preechinulin + reduced [NADPH--hemoprotein reductase] + O2 = neoechinulin A + oxidized [NADPH--hemoprotein reductase] + 2 H2O + H(+). It participates in secondary metabolite biosynthesis. It functions in the pathway alkaloid biosynthesis. Its function is as follows. Cytochrome P450 monooxygenase; part of the gene cluster that mediates the biosynthesis of echinulin family alkaloid. The pathway begins with the biosynthesis of the cyclic dipeptide cyclo-L-Trp-L-Ala (cyclo-TA) by the NRPS echPS via condensation of L-alanine and L-tryptophan. The prenyltransferase echPT1 then catalyzes the first prenylation step, a reverse prenylation reaction at C2, to yield preechinulin. Preechinulin is the substrate of the cytochrome P450 monooxygenase echP450 that catalyzes the formation of the double bond between C10 and C11 to produce neoechulin A. The unique prenyltransferase echPT2 functions as a competitive enzyme with echP450 for preechinulin metabolization and uses preechinulin for effective regiospecific prenylations. Preechinulin is prenylated by echPT2 at C5 or C7. C7-prenylation leads to accumulation of tardioxopiperazine B without further modification by echPT2. In contrast, the C5-prenylated tardioxopiperazine A can be prenylated again by echPT2, predominantly at C7 to form echinulin or less frequently at C4 to give variecolorin L. EchPT2 also accepts neoechilunin A to produce varlecolorin G (prenylation at C5) or isoechinulin A (prenylation at C7). EchPT2 further converts isoechinulin A into dehydroechinulin. Moreover, a yet unidentified enzyme can also convert neoechilunin A into neoechilunin B by introducing a double bond between positions C14 and C17 and thus provides a further substrate to echPT2 for C5 and C7 prenylation. The sequence is that of Echilunin cytochrome P450 monooxygenase from Aspergillus ruber (strain CBS 135680).